The sequence spans 445 residues: Phosphoglucosamine mutase (445 aa).

Catalysis depends on serine 102, which acts as the Phosphoserine intermediate. Residues serine 102, aspartate 241, aspartate 243, and aspartate 245 each contribute to the Mg(2+) site. At serine 102 the chain carries Phosphoserine.

The protein belongs to the phosphohexose mutase family. Mg(2+) serves as cofactor. Post-translationally, activated by phosphorylation.

It catalyses the reaction alpha-D-glucosamine 1-phosphate = D-glucosamine 6-phosphate. Its function is as follows. Catalyzes the conversion of glucosamine-6-phosphate to glucosamine-1-phosphate. The chain is Phosphoglucosamine mutase from Shewanella sp. (strain W3-18-1).